Here is a 129-residue protein sequence, read N- to C-terminus: Small ribosomal subunit protein uS8 (129 aa).

Belongs to the universal ribosomal protein uS8 family. As to quaternary structure, part of the 30S ribosomal subunit. Contacts proteins S5 and S12.

Functionally, one of the primary rRNA binding proteins, it binds directly to 16S rRNA central domain where it helps coordinate assembly of the platform of the 30S subunit. The polypeptide is Small ribosomal subunit protein uS8 (Mesoplasma florum (strain ATCC 33453 / NBRC 100688 / NCTC 11704 / L1) (Acholeplasma florum)).